Here is a 185-residue protein sequence, read N- to C-terminus: Ribosome-recycling factor (185 aa).

It belongs to the RRF family.

It is found in the cytoplasm. In terms of biological role, responsible for the release of ribosomes from messenger RNA at the termination of protein biosynthesis. May increase the efficiency of translation by recycling ribosomes from one round of translation to another. This is Ribosome-recycling factor from Teredinibacter turnerae (strain ATCC 39867 / T7901).